The chain runs to 445 residues: Tyrosine--tRNA ligase, mitochondrial (445 aa).

Residue Tyr33 participates in L-tyrosine binding. Residue Asp37 participates in ATP binding. The short motif at 38 to 47 (PTAASLHVGN) is the 'HIGH' region element. L-tyrosine is bound by residues Asp77, Tyr184, Gln188, Asp191, and Gln210. The short motif at 245–249 (KLGKS) is the 'KMSKS' region element. Lys248 is an ATP binding site. The S4 RNA-binding domain maps to 384 to 445 (QPFSRLLRTL…GKRTFVLDSL (62 aa)).

It belongs to the class-I aminoacyl-tRNA synthetase family. Homodimer.

It is found in the mitochondrion matrix. It carries out the reaction tRNA(Tyr) + L-tyrosine + ATP = L-tyrosyl-tRNA(Tyr) + AMP + diphosphate + H(+). Functionally, catalyzes the attachment of tyrosine to tRNA(Tyr) in a two-step reaction: tyrosine is first activated by ATP to form Tyr-AMP and then transferred to the acceptor end of tRNA(Tyr). The polypeptide is Tyrosine--tRNA ligase, mitochondrial (Schizosaccharomyces pombe (strain 972 / ATCC 24843) (Fission yeast)).